The chain runs to 101 residues: Apolipoprotein C-II (101 aa).

Residues 1–22 (MGTRYFLVGFLILLVLGFEVQG) form the signal peptide. The interval 66–74 (AVDEKIRDI) is lipid binding. Residues 78 to 101 (STAAVTTYAGIITDQVFSVLSGKD) form a lipoprotein lipase cofactor region.

This sequence belongs to the apolipoprotein C2 family. Proapolipoprotein C-II is synthesized as a sialic acid containing glycoprotein which is subsequently desialylated prior to its proteolytic processing. Post-translationally, proapolipoprotein C-II undergoes proteolytic cleavage of its N-terminal hexapeptide to generate apolipoprotein C-II. In bovine, proapolipoprotein C-II was found to be the minor form whereas apolipoprotein C-II was found to be the major form in plasma.

The protein localises to the secreted. Functionally, component of chylomicrons, very low-density lipoproteins (VLDL), low-density lipoproteins (LDL), and high-density lipoproteins (HDL) in plasma. Plays an important role in lipoprotein metabolism as an activator of lipoprotein lipase. Both proapolipoprotein C-II and apolipoprotein C-II can activate lipoprotein lipase. The chain is Apolipoprotein C-II (APOC2) from Bos taurus (Bovine).